The following is a 309-amino-acid chain: Oxygen-dependent coproporphyrinogen-III oxidase (309 aa).

Position 100 (Ser100) interacts with substrate. 2 residues coordinate a divalent metal cation: His104 and His114. Residue His114 is the Proton donor of the active site. 116-118 is a binding site for substrate; the sequence is NVR. 2 residues coordinate a divalent metal cation: His153 and His183. The segment at 248–283 is important for dimerization; that stretch reads YAEFNLVYDRGTLFGLQSGGRTESILMSLPPIVHWE. Residue 266–268 participates in substrate binding; that stretch reads GGR.

This sequence belongs to the aerobic coproporphyrinogen-III oxidase family. Homodimer. It depends on a divalent metal cation as a cofactor.

It is found in the cytoplasm. It catalyses the reaction coproporphyrinogen III + O2 + 2 H(+) = protoporphyrinogen IX + 2 CO2 + 2 H2O. The protein operates within porphyrin-containing compound metabolism; protoporphyrin-IX biosynthesis; protoporphyrinogen-IX from coproporphyrinogen-III (O2 route): step 1/1. Involved in the heme biosynthesis. Catalyzes the aerobic oxidative decarboxylation of propionate groups of rings A and B of coproporphyrinogen-III to yield the vinyl groups in protoporphyrinogen-IX. This Legionella pneumophila (strain Lens) protein is Oxygen-dependent coproporphyrinogen-III oxidase.